The following is a 135-amino-acid chain: HTH-type transcriptional activator AarP (135 aa).

Residues 22–120 form the HTH araC/xylS-type domain; the sequence is SEILVWIEGN…GISPSLYRLS (99 aa). DNA-binding regions (H-T-H motif) lie at residues 39 to 60 and 87 to 110; these read DDIAQHSGYTKWHLQRVFRKIV and VIDIALKYQFDSQQSFAKRFKAYL.

Its function is as follows. Transcriptional activator of 2'-N-acetyltransferase. In Providencia stuartii, this protein is HTH-type transcriptional activator AarP (aarP).